Here is a 406-residue protein sequence, read N- to C-terminus: Cysteine desulfurase (406 aa).

Position 226 is an N6-(pyridoxal phosphate)lysine (K226). The active-site Cysteine persulfide intermediate is C364.

The protein belongs to the class-V pyridoxal-phosphate-dependent aminotransferase family. Csd subfamily. Homodimer. Interacts with SufE and the SufBCD complex composed of SufB, SufC and SufD. The interaction with SufE is required to mediate the direct transfer of the sulfur atom from the S-sulfanylcysteine. The cofactor is pyridoxal 5'-phosphate.

The protein localises to the cytoplasm. It catalyses the reaction (sulfur carrier)-H + L-cysteine = (sulfur carrier)-SH + L-alanine. The catalysed reaction is L-selenocysteine + AH2 = hydrogenselenide + L-alanine + A + H(+). It participates in cofactor biosynthesis; iron-sulfur cluster biosynthesis. In terms of biological role, cysteine desulfurases mobilize the sulfur from L-cysteine to yield L-alanine, an essential step in sulfur metabolism for biosynthesis of a variety of sulfur-containing biomolecules. Component of the suf operon, which is activated and required under specific conditions such as oxidative stress and iron limitation. Acts as a potent selenocysteine lyase in vitro, that mobilizes selenium from L-selenocysteine. Selenocysteine lyase activity is however unsure in vivo. In Escherichia fergusonii (strain ATCC 35469 / DSM 13698 / CCUG 18766 / IAM 14443 / JCM 21226 / LMG 7866 / NBRC 102419 / NCTC 12128 / CDC 0568-73), this protein is Cysteine desulfurase.